Here is a 505-residue protein sequence, read N- to C-terminus: Maturase K (505 aa).

Belongs to the intron maturase 2 family. MatK subfamily.

It is found in the plastid. Its subcellular location is the chloroplast. In terms of biological role, usually encoded in the trnK tRNA gene intron. Probably assists in splicing its own and other chloroplast group II introns. This is Maturase K from Morus indica (Mulberry).